Consider the following 656-residue polypeptide: PAN2-PAN3 deadenylation complex subunit pan3 (656 aa).

2 disordered regions span residues 1-24 (MAATRYNSGDLRRQVGSPRAKNRD) and 75-117 (SFTP…QQAN). The segment at 24 to 53 (DTKETLCRNVVIYGHCRWEDSGCTFNHDQN) adopts a C3H1-type zinc-finger fold. The PABPC-interacting motif-2 (PAM-2) signature appears at 63-83 (NSNRRVFNVESPSFTPANQQQ). Polar residues-rich tracts occupy residues 75–96 (SFTPANQQQSAGKKSTFSSQAA) and 107–117 (GTSTPTLQQAN). Residues 251–514 (QLLPNSGLPN…TVETLLGGIT (264 aa)) are pseudokinase domain. ATP is bound by residues 275 to 280 (TRNSTC), arginine 302, 352 to 359 (DFHPLSET), and 412 to 413 (SK). A coiled-coil region spans residues 515-553 (THLANFANFVMQESDEKEFHLMRELENGRIARLMFKLSV). The segment at 554-656 (VNERGDSCGV…SKPSATGATI (103 aa)) is knob domain.

The protein belongs to the protein kinase superfamily. PAN3 family. As to quaternary structure, homodimer. Forms a heterotrimer with a catalytic subunit par-1/pan2 to form the poly(A)-nuclease (PAN) deadenylation complex. Interacts (via PAM-2 motif) with poly(A)-binding protein pabp-1 (via PABC domain), conferring substrate specificity of the enzyme complex.

It is found in the cytoplasm. In terms of biological role, regulatory subunit of the poly(A)-nuclease (PAN) deadenylation complex, one of two cytoplasmic mRNA deadenylases involved in mRNA turnover. PAN specifically shortens poly(A) tails of RNA and the activity is stimulated by poly(A)-binding protein pabp-1. PAN deadenylation is followed by rapid degradation of the shortened mRNA tails by the CCR4-NOT complex. Deadenylated mRNAs are then degraded by two alternative mechanisms, namely exosome-mediated 3'-5' exonucleolytic degradation, or deadenylation-dependent mRNA decaping and subsequent 5'-3' exonucleolytic degradation by rgb-30/xrn1. May also be involved in post-transcriptional maturation of mRNA poly(A) tails. par-2/pan3 acts as a positive regulator for PAN activity, recruiting the catalytic subunit par-1/pan2 to mRNA via its interaction with RNA and with pabp-1. The chain is PAN2-PAN3 deadenylation complex subunit pan3 (par-2) from Neurospora crassa (strain ATCC 24698 / 74-OR23-1A / CBS 708.71 / DSM 1257 / FGSC 987).